The sequence spans 646 residues: Ribonuclease Y (646 aa).

Residues 4-24 (VLVVLLSLVLVVLSVLILAVA) form a helical membrane-spanning segment. Disordered regions lie at residues 43-62 (PRTP…DFDE) and 69-118 (LPAP…HGGS). Residues 336-402 (VVTVLHLPGD…RITLAALVSD (67 aa)) form the KH domain. An HD domain is found at 462–555 (VLAHLIESAH…TQAADQISGG (94 aa)).

This sequence belongs to the RNase Y family.

The protein localises to the cell membrane. Its function is as follows. Endoribonuclease that initiates mRNA decay. The polypeptide is Ribonuclease Y (Frankia casuarinae (strain DSM 45818 / CECT 9043 / HFP020203 / CcI3)).